The chain runs to 228 residues: uncharacterized protein (228 aa).

The next 5 membrane-spanning stretches (helical) occupy residues 14-34 (HTIS…MLLA), 42-62 (VALF…AITL), 130-150 (FMFS…LVGS), 156-176 (FSFD…VLFM), and 192-212 (IAIA…LIAL).

The protein belongs to the AzlC family.

It localises to the cell membrane. This is an uncharacterized protein from Helicobacter pylori (strain J99 / ATCC 700824) (Campylobacter pylori J99).